Consider the following 255-residue polypeptide: Large ribosomal subunit protein uL4 (255 aa).

Belongs to the universal ribosomal protein uL4 family. Part of the 50S ribosomal subunit.

Functionally, one of the primary rRNA binding proteins, this protein initially binds near the 5'-end of the 23S rRNA. It is important during the early stages of 50S assembly. It makes multiple contacts with different domains of the 23S rRNA in the assembled 50S subunit and ribosome. Its function is as follows. Forms part of the polypeptide exit tunnel. This chain is Large ribosomal subunit protein uL4, found in Pyrococcus furiosus (strain ATCC 43587 / DSM 3638 / JCM 8422 / Vc1).